Consider the following 110-residue polypeptide: Ribonuclease P protein component 4 (110 aa).

Cysteine 65, cysteine 68, cysteine 94, and cysteine 97 together coordinate Zn(2+).

This sequence belongs to the eukaryotic/archaeal RNase P protein component 4 family. In terms of assembly, consists of a catalytic RNA component and at least 4-5 protein subunits. Requires Zn(2+) as cofactor.

The protein resides in the cytoplasm. The catalysed reaction is Endonucleolytic cleavage of RNA, removing 5'-extranucleotides from tRNA precursor.. Its function is as follows. Part of ribonuclease P, a protein complex that generates mature tRNA molecules by cleaving their 5'-ends. This Methanococcus maripaludis (strain C7 / ATCC BAA-1331) protein is Ribonuclease P protein component 4.